Reading from the N-terminus, the 173-residue chain is Crossover junction endodeoxyribonuclease RuvC (173 aa).

Catalysis depends on residues D8, E67, and D139. The Mg(2+) site is built by D8, E67, and D139.

It belongs to the RuvC family. As to quaternary structure, homodimer which binds Holliday junction (HJ) DNA. The HJ becomes 2-fold symmetrical on binding to RuvC with unstacked arms; it has a different conformation from HJ DNA in complex with RuvA. In the full resolvosome a probable DNA-RuvA(4)-RuvB(12)-RuvC(2) complex forms which resolves the HJ. Requires Mg(2+) as cofactor.

The protein localises to the cytoplasm. The enzyme catalyses Endonucleolytic cleavage at a junction such as a reciprocal single-stranded crossover between two homologous DNA duplexes (Holliday junction).. In terms of biological role, the RuvA-RuvB-RuvC complex processes Holliday junction (HJ) DNA during genetic recombination and DNA repair. Endonuclease that resolves HJ intermediates. Cleaves cruciform DNA by making single-stranded nicks across the HJ at symmetrical positions within the homologous arms, yielding a 5'-phosphate and a 3'-hydroxyl group; requires a central core of homology in the junction. The consensus cleavage sequence is 5'-(A/T)TT(C/G)-3'. Cleavage occurs on the 3'-side of the TT dinucleotide at the point of strand exchange. HJ branch migration catalyzed by RuvA-RuvB allows RuvC to scan DNA until it finds its consensus sequence, where it cleaves and resolves the cruciform DNA. The chain is Crossover junction endodeoxyribonuclease RuvC from Shewanella woodyi (strain ATCC 51908 / MS32).